The primary structure comprises 593 residues: Mitosis inducer protein kinase cdr1 (593 aa).

Residues 12–258 form the Protein kinase domain; sequence WRLGKTLGTG…IPEVFSHPFL (247 aa). ATP contacts are provided by residues 18-26 and Lys41; that span reads LGTGSTSCV. The Proton acceptor role is filled by Asp128. Ser550 carries the phosphoserine modification.

The protein belongs to the protein kinase superfamily. CAMK Ser/Thr protein kinase family. NIM1 subfamily. In terms of assembly, interacts with msp1.

The enzyme catalyses L-seryl-[protein] + ATP = O-phospho-L-seryl-[protein] + ADP + H(+). It carries out the reaction L-threonyl-[protein] + ATP = O-phospho-L-threonyl-[protein] + ADP + H(+). This protein, a dose-dependent mitotic inducer, appears to function as a negative regulator of mitosis inhibitor wee1 by phosphorylating and inactivating it. In Schizosaccharomyces pombe (strain 972 / ATCC 24843) (Fission yeast), this protein is Mitosis inducer protein kinase cdr1 (cdr1).